The sequence spans 391 residues: Formate-dependent phosphoribosylglycinamide formyltransferase (391 aa).

N(1)-(5-phospho-beta-D-ribosyl)glycinamide contacts are provided by residues 20-21 (EL) and E80. Residues R112, K153, 158 to 163 (SSGKGQ), 193 to 196 (EGFI), and E201 each bind ATP. The 190-residue stretch at 117–306 (RLAAETLGLP…EFALHVRAIL (190 aa)) folds into the ATP-grasp domain. Mg(2+) contacts are provided by E265 and E277. N(1)-(5-phospho-beta-D-ribosyl)glycinamide contacts are provided by residues D284, K354, and 361–362 (RR).

This sequence belongs to the PurK/PurT family. As to quaternary structure, homodimer.

The catalysed reaction is N(1)-(5-phospho-beta-D-ribosyl)glycinamide + formate + ATP = N(2)-formyl-N(1)-(5-phospho-beta-D-ribosyl)glycinamide + ADP + phosphate + H(+). It participates in purine metabolism; IMP biosynthesis via de novo pathway; N(2)-formyl-N(1)-(5-phospho-D-ribosyl)glycinamide from N(1)-(5-phospho-D-ribosyl)glycinamide (formate route): step 1/1. Its function is as follows. Involved in the de novo purine biosynthesis. Catalyzes the transfer of formate to 5-phospho-ribosyl-glycinamide (GAR), producing 5-phospho-ribosyl-N-formylglycinamide (FGAR). Formate is provided by PurU via hydrolysis of 10-formyl-tetrahydrofolate. The sequence is that of Formate-dependent phosphoribosylglycinamide formyltransferase from Shewanella sp. (strain ANA-3).